The following is a 1065-amino-acid chain: DNA-directed RNA polymerase subunit beta (1065 aa).

It belongs to the RNA polymerase beta chain family. In terms of assembly, in plastids the minimal PEP RNA polymerase catalytic core is composed of four subunits: alpha, beta, beta', and beta''. When a (nuclear-encoded) sigma factor is associated with the core the holoenzyme is formed, which can initiate transcription.

It localises to the plastid. The protein localises to the chloroplast. The catalysed reaction is RNA(n) + a ribonucleoside 5'-triphosphate = RNA(n+1) + diphosphate. In terms of biological role, DNA-dependent RNA polymerase catalyzes the transcription of DNA into RNA using the four ribonucleoside triphosphates as substrates. The protein is DNA-directed RNA polymerase subunit beta of Marchantia polymorpha (Common liverwort).